A 304-amino-acid polypeptide reads, in one-letter code: Flagellin (304 aa).

This sequence belongs to the bacterial flagellin family. In terms of assembly, interacts with FliW in a 1:1 complex. Forms a 3-way complex of Hag, FliS and FliW, in which Flis and FliW do not directly interact.

Its subcellular location is the secreted. The protein resides in the bacterial flagellum. The protein localises to the cell wall. Flagellin is the subunit which polymerizes to form the filaments of bacterial flagella. Assembly into flagella requires FliW. Acts as a homeostatic autoinhibitory regulator to control its own cytoplasmic levels. Partner switching by flagellin between FliW and CsrA provides a flagellar assembly checkpoint to tightly control the timing of flagellin synthesis. Flagellin binds to assembly factor FliW, freeing translation regulator CsrA to repress translation of the flagellin mRNA. When the flagellar hook is assembled flagellin is secreted, depleting intracellular flagellin, which frees FliW to interact with CsrA. This derepresses flagellin translation and provides protein for flagellar assembly. Once the flagellar filament is completed cytoplasmic flagellin levels rise and CsrA translation repression of flagellin reinitiates. This is Flagellin from Bacillus subtilis (strain 168).